Here is a 356-residue protein sequence, read N- to C-terminus: Phosphate acyltransferase (356 aa).

The protein belongs to the PlsX family. As to quaternary structure, homodimer. Probably interacts with PlsY.

Its subcellular location is the cytoplasm. It carries out the reaction a fatty acyl-[ACP] + phosphate = an acyl phosphate + holo-[ACP]. It functions in the pathway lipid metabolism; phospholipid metabolism. In terms of biological role, catalyzes the reversible formation of acyl-phosphate (acyl-PO(4)) from acyl-[acyl-carrier-protein] (acyl-ACP). This enzyme utilizes acyl-ACP as fatty acyl donor, but not acyl-CoA. This Bartonella henselae (strain ATCC 49882 / DSM 28221 / CCUG 30454 / Houston 1) (Rochalimaea henselae) protein is Phosphate acyltransferase.